A 169-amino-acid chain; its full sequence is Peptide methionine sulfoxide reductase MsrA (169 aa).

Cysteine 10 is an active-site residue.

The protein belongs to the MsrA Met sulfoxide reductase family.

The enzyme catalyses L-methionyl-[protein] + [thioredoxin]-disulfide + H2O = L-methionyl-(S)-S-oxide-[protein] + [thioredoxin]-dithiol. It carries out the reaction [thioredoxin]-disulfide + L-methionine + H2O = L-methionine (S)-S-oxide + [thioredoxin]-dithiol. Has an important function as a repair enzyme for proteins that have been inactivated by oxidation. Catalyzes the reversible oxidation-reduction of methionine sulfoxide in proteins to methionine. The polypeptide is Peptide methionine sulfoxide reductase MsrA (Streptococcus pyogenes serotype M6 (strain ATCC BAA-946 / MGAS10394)).